The primary structure comprises 225 residues: MALDLLRSSLGFLTTLPVKGDVDVLRRNLWVFSFVGIFIGSVISIPAVLGFWFLCVLLYVAIEGVNHIDGLADFGDAFFAPEERKKVAIKDLNLGTGGAVFLCVYFLILFYSFQRVSAFYIIFSQVLAKFSMLLLLTTSKPAWQGMTGFMMEFARKRDVVIGSLPLLLVVLKPLAVFPLLFAITISLLVKRYAEEKFGGVSGDVVGASNCLVFAGSLLVCYFLAD.

5 helical membrane passes run 34-54, 93-113, 116-136, 165-185, and 204-224; these read FVGI…FWFL, NLGT…FYSF, VSAF…LLLL, PLLL…AITI, and VVGA…YFLA.

It belongs to the CobS family. The cofactor is Mg(2+).

It localises to the cell membrane. It carries out the reaction alpha-ribazole + adenosylcob(III)inamide-GDP = adenosylcob(III)alamin + GMP + H(+). It catalyses the reaction alpha-ribazole 5'-phosphate + adenosylcob(III)inamide-GDP = adenosylcob(III)alamin 5'-phosphate + GMP + H(+). It functions in the pathway cofactor biosynthesis; adenosylcobalamin biosynthesis; adenosylcobalamin from cob(II)yrinate a,c-diamide: step 7/7. Functionally, joins adenosylcobinamide-GDP and alpha-ribazole to generate adenosylcobalamin (Ado-cobalamin). Also synthesizes adenosylcobalamin 5'-phosphate from adenosylcobinamide-GDP and alpha-ribazole 5'-phosphate. This Archaeoglobus fulgidus (strain ATCC 49558 / DSM 4304 / JCM 9628 / NBRC 100126 / VC-16) protein is Adenosylcobinamide-GDP ribazoletransferase (cobS1).